The primary structure comprises 186 residues: Large ribosomal subunit protein uL6 (186 aa).

Belongs to the universal ribosomal protein uL6 family. In terms of assembly, part of the 50S ribosomal subunit.

In terms of biological role, this protein binds to the 23S rRNA, and is important in its secondary structure. It is located near the subunit interface in the base of the L7/L12 stalk, and near the tRNA binding site of the peptidyltransferase center. The protein is Large ribosomal subunit protein uL6 of Ignicoccus hospitalis (strain KIN4/I / DSM 18386 / JCM 14125).